Reading from the N-terminus, the 57-residue chain is Lantibiotic nisin-A (57 aa).

Residues 1-23 (MSTKDFNLDLVSVSKKDSGASPR) constitute a propeptide that is removed on maturation. Residue Thr25 is modified to (Z)-2,3-didehydrobutyrine. The lanthionine (Ser-Cys) cross-link spans 26-30 (SISLC). At Ser28 the chain carries 2,3-didehydroalanine (Ser). Cross-links (beta-methyllanthionine (Thr-Cys)) lie at residues 31–34 (TPGC), 36–42 (TGALMGC), 46–49 (TATC), and 48–51 (TCHC). Ser56 carries the 2,3-didehydroalanine (Ser) modification.

It belongs to the type A lantibiotic family. Maturation of lantibiotics involves the enzymatic conversion of Thr, and Ser into dehydrated AA and the formation of thioether bonds with cysteine. This is followed by membrane translocation and cleavage of the modified precursor. Post-translationally, the structure of the 2,3-didehydrobutyrine is not discussed in PubMed:8454055. However, in Fig. 1 the residue is diagrammed as the Z-isomer.

In terms of biological role, lanthionine-containing peptide antibiotic (lantibiotic) active on Gram-positive bacteria. The bactericidal activity of lantibiotics is based on depolarization of energized bacterial cytoplasmic membranes, initiated by the formation of aqueous transmembrane pores. The sequence is that of Lantibiotic nisin-A (spaN) from Lactococcus lactis subsp. lactis (Streptococcus lactis).